The following is a 502-amino-acid chain: Putative diacyglycerol O-acyltransferase MT1809 (502 aa).

The Proton acceptor role is filled by histidine 174.

The protein belongs to the long-chain O-acyltransferase family.

The catalysed reaction is an acyl-CoA + a 1,2-diacyl-sn-glycerol = a triacyl-sn-glycerol + CoA. Its pathway is glycerolipid metabolism; triacylglycerol biosynthesis. This chain is Putative diacyglycerol O-acyltransferase MT1809, found in Mycobacterium tuberculosis (strain CDC 1551 / Oshkosh).